Reading from the N-terminus, the 570-residue chain is Hydroxylamine reductase (570 aa).

Positions 5, 8, 17, and 23 each coordinate [4Fe-4S] cluster. The hybrid [4Fe-2O-2S] cluster site is built by H266, E290, C334, C425, C453, C478, E513, and K515. A Cysteine persulfide modification is found at C425.

Belongs to the HCP family. It depends on [4Fe-4S] cluster as a cofactor. Hybrid [4Fe-2O-2S] cluster is required as a cofactor.

It localises to the cytoplasm. The catalysed reaction is A + NH4(+) + H2O = hydroxylamine + AH2 + H(+). Catalyzes the reduction of hydroxylamine to form NH(3) and H(2)O. In Clostridium botulinum (strain Langeland / NCTC 10281 / Type F), this protein is Hydroxylamine reductase.